Reading from the N-terminus, the 505-residue chain is Zinc finger protein 649 (505 aa).

The 72-residue stretch at 8–79 folds into the KRAB domain; the sequence is LTLEDVAVDF…EDEIHSPAHP (72 aa). Residue K112 forms a Glycyl lysine isopeptide (Lys-Gly) (interchain with G-Cter in SUMO2) linkage. C2H2-type zinc fingers lie at residues 178-200, 206-228, 234-256, 262-284, 290-312, 318-340, 346-368, 374-396, 402-424, and 430-452; these read HECT…KRIH, HVCS…ERAH, HGCS…ERAH, YGCS…QRIH, HQCS…QRTH, HTCS…QRTH, YGCI…QRYH, FVCP…QKIH, YKCS…HRTH, and YGCD…KRIH. The interval 455–481 is disordered; the sequence is EKRGDSVKVENPSTASHSLSPSEHVQG. Polar residues predominate over residues 465–477; it reads NPSTASHSLSPSE.

This sequence belongs to the krueppel C2H2-type zinc-finger protein family. As to expression, highly expressed in heart, skeletal muscle, and brain. Lower expression in liver, lung, kidney, pancreas and placenta.

The protein resides in the nucleus. Functionally, transcriptional repressor. Regulator of transcriptional factor complexes and may suppress SRE and AP-1 transcription activities mediated by growth factor signaling pathways. This is Zinc finger protein 649 (ZNF649) from Homo sapiens (Human).